The primary structure comprises 488 residues: GTPase Der (488 aa).

2 EngA-type G domains span residues 3–166 and 201–374; these read PVVA…VSDG and IKLA…QCAT. Residues 9–16, 56–60, 118–121, 207–214, 254–258, and 319–322 each bind GTP; these read GRPNVGKS, DTGGI, NKTD, DTAGV, and NKWD. The KH-like domain occupies 375 to 459; that stretch reads KRVSTALLTR…PIRIQFNEGA (85 aa).

This sequence belongs to the TRAFAC class TrmE-Era-EngA-EngB-Septin-like GTPase superfamily. EngA (Der) GTPase family. In terms of assembly, associates with the 50S ribosomal subunit.

GTPase that plays an essential role in the late steps of ribosome biogenesis. The chain is GTPase Der from Sodalis glossinidius (strain morsitans).